A 796-amino-acid chain; its full sequence is MEGLTLSDAEQKYYSDLFSYCDIESTKKVVVNGRVLELFRAAQLPNDVVLQIMELCGATRLGYFGRSQFYIALKLVAVAQSGFPLRVESINTVKDLPLPRFVASKNEQESRHAASYSSDSENQGSYSGVIPPPPGRGQVKKGSVSHDTVQPRTSADAQEPASPVVSPQQSPPTSPHTWRKHSRHPSGGNSERPLAGPGPFWSPFGEAQSGSSAGDAVWSGHSPPPPQENWVSFADTPPTSTLLTMHPASVQDQTTVRTVASATTAIEIRRQSSSYDDPWKITDEQRQYYVNQFKTIQPDLNGFIPGSAAKEFFTKSKLPILELSHIWELSDFDKDGALTLDEFCAAFHLVVARKNGYDLPEKLPESLMPKLIDLEDSADVGDQPGEVGYSGSPAEAPPSKSPSMPSLNQTWPELNQSSEQWETFSERSSSSQTLTQFDSNIAPADPDTAIVHPVPIRMTPSKIHMQEMELKRTGSDHTNPTSPLLVKPSDLLEENKINSSVKFASGNTVADGYSSSDSFTSDPEQIGSNVTRQRSHSGTSPDNTAPPPPPPRPQPSHSRSSSLDMNRTFTVTTGQQQAGVVAHPPAVPPRPQPSQAPGPAVHRPVDADGLITHTSTSPQQIPEQPNFADFSQFEVFAASNVNDEQDDEAEKHPEVLPAEKASDPASSLRVAKTDSKTEEKTAASAPANVSKGTTPLAPPPKPVRRRLKSEDELRPEVDEHTQKTGVLAAVLASQPSIPRSVGKDKKAIQASIRRNKETNTVLARLNSELQQQLKDVLEERISLEVQLEQLRPFSHL.

In terms of domain architecture, EH 1 spans 10–113 (EQKYYSDLFS…SKNEQESRHA (104 aa)). The tract at residues 105 to 237 (KNEQESRHAA…ENWVSFADTP (133 aa)) is disordered. Over residues 115–126 (SYSSDSENQGSY) the composition is skewed to polar residues. 5 positions are modified to phosphoserine: Ser143, Ser145, Ser162, Ser166, and Ser170. The span at 145-156 (SHDTVQPRTSAD) shows a compositional bias: polar residues. Thr173 is modified (phosphothreonine). Phosphoserine occurs at positions 272 and 273. Positions 285–374 (QRQYYVNQFK…ESLMPKLIDL (90 aa)) constitute an EH 2 domain. Tyr288 carries the phosphotyrosine modification. Ser307 carries the phosphoserine modification. The 36-residue stretch at 318 to 353 (LPILELSHIWELSDFDKDGALTLDEFCAAFHLVVAR) folds into the EF-hand domain. Ca(2+) contacts are provided by Asp331, Asp333, Asp335, and Glu342. The disordered stretch occupies residues 377–433 (SADVGDQPGEVGYSGSPAEAPPSKSPSMPSLNQTWPELNQSSEQWETFSERSSSSQT). The span at 407 to 433 (LNQTWPELNQSSEQWETFSERSSSSQT) shows a compositional bias: polar residues. Phosphoserine occurs at positions 475, 482, 489, and 540. Residues 506-543 (GNTVADGYSSSDSFTSDPEQIGSNVTRQRSHSGTSPDN) are compositionally biased toward polar residues. Disordered regions lie at residues 506-624 (GNTV…IPEQ) and 638-725 (ASNV…QKTG). Thr544 carries the phosphothreonine modification. Pro residues predominate over residues 544–554 (TAPPPPPPRPQ). Ser562 is subject to Phosphoserine. Polar residues predominate over residues 563–574 (LDMNRTFTVTTG). Over residues 575-584 (QQQAGVVAHP) the composition is skewed to low complexity. Residues 585-596 (PAVPPRPQPSQA) are compositionally biased toward pro residues. Over residues 612 to 623 (THTSTSPQQIPE) the composition is skewed to polar residues. Positions 652–796 (HPEVLPAEKA…LEQLRPFSHL (145 aa)) are interaction with RALBP1. Basic and acidic residues-rich tracts occupy residues 671–681 (AKTDSKTEEKT) and 708–722 (KSED…EHTQ). Phosphoserine is present on residues Ser709 and Ser740. Residues 751-791 (SIRRNKETNTVLARLNSELQQQLKDVLEERISLEVQLEQLR) are a coiled coil.

In terms of assembly, homodimer (Potential). Interacts with RAB11FIP2. Interacts with RALBP1, CRK and GRB2. Binding to RALBP1 does not affect its Ral-binding activity. Forms a complex with the SH3 domains of CRK and GRB2 which may link it to an EGF-responsive tyrosine kinase. Interacts with AMPH, ITSN1 (via SH3 domains) and SGIP1; may be involved in clathrin-mediated endocytosis. In terms of processing, EGF stimulates phosphorylation on Tyr-residues. Widely expressed with highest levels in heart and testis.

The protein resides in the membrane. Its subcellular location is the clathrin-coated pit. In terms of biological role, may coordinate the cellular actions of activated EGF receptors and Ral-GTPases. This Homo sapiens (Human) protein is RalBP1-associated Eps domain-containing protein 1 (REPS1).